A 188-amino-acid chain; its full sequence is MTIKSDKWIKKMSQEYNMIEPFEAGQIKVSNNQKIVSYGTSSYGYDVRCADEFKIFTNINSSIVDPKNFNDKNFVDFKGDVCIIPPNSFALARTVEKFKIPRDTLVVCLGKSTYARCGIIVNVTPLEPEWEGYVTLEFSNTTPLPAKIYANEGVAQMLFFQSDEECETSYADKGGKYQGQVGVTLPKC.

Residues 111 to 116 (KSTYAR), 135 to 137 (TLE), Gln156, Tyr170, and Gln180 contribute to the dCTP site. Glu137 acts as the Proton donor/acceptor in catalysis.

This sequence belongs to the dCTP deaminase family. In terms of assembly, homotrimer.

The enzyme catalyses dCTP + H2O + H(+) = dUTP + NH4(+). Its pathway is pyrimidine metabolism; dUMP biosynthesis; dUMP from dCTP (dUTP route): step 1/2. In terms of biological role, catalyzes the deamination of dCTP to dUTP. In Francisella philomiragia subsp. philomiragia (strain ATCC 25017 / CCUG 19701 / FSC 153 / O#319-036), this protein is dCTP deaminase.